Reading from the N-terminus, the 622-residue chain is MATVLSRALKLPGKKSPDLGEYDPLTQADSDESEDDLVLNLQKNGGVKNGKSPLGEAPEPDSDAEVAEAAKPHLSEVTTEGYPSEPLGGLEQKAASSLVSYVRTSVFLLTLGISMILVLLCAFLIPCPPRDLHSTWSRHLGSQGGGDLSPLELADVNGDGLRDVLLSFVMSRNGSAVGVSRPAANLVCLSGMNGSTLWSSLLPEEARDITCLELMPGSLAETICLVTGTHKMLSAFNATSGKAIWTLNPNYLSNGTLAAPVVVLPDLDEDGVRDLVVLAIGELQPDLCFLLVSGRTGNPVGRPVKYNIVGVGNLIGPQVYITTNGAVYILFGFGNIQAVALRDIFVQAQNRDSSPPSLQIEEPEWEKRRSINLSELIDVYSDGVELLQMVKAPDSNCSNLLITTRQSLVLLRGQNLTPYWALRLQGLRSQPTPGYFTDDQTLDFLLQIQDGVGMKKMMVVDGDSGSIVWSYRAPCHMKETPATSAVTSDQKSVFLFWAEGLSAASPNSDIILGTEPPSLHHLYLLHPAFPSILLDLANTTGTVTASEVGINDLWKDAFYVTRTTGPSSEGHPAALVVSKLSLRWALMEGQMAQLQESTPKIGRGELRRFLSRIKFVEAPYEI.

The interval 1–68 is disordered; sequence MATVLSRALK…EPDSDAEVAE (68 aa). Phosphoserine is present on Ser16. Phosphothreonine is present on Thr26. Phosphoserine occurs at positions 30, 33, and 62. A helical membrane pass occupies residues 104–124; that stretch reads TSVFLLTLGISMILVLLCAFL.

The protein belongs to the FAM234 family.

The protein resides in the membrane. Its subcellular location is the golgi outpost. The protein localises to the cytoplasm. It is found in the cytoskeleton. It localises to the microtubule organizing center. In Homo sapiens (Human), this protein is Protein FAM234B.